The sequence spans 176 residues: Adenine phosphoribosyltransferase (176 aa).

Belongs to the purine/pyrimidine phosphoribosyltransferase family. In terms of assembly, homodimer.

The protein localises to the cytoplasm. It catalyses the reaction AMP + diphosphate = 5-phospho-alpha-D-ribose 1-diphosphate + adenine. The protein operates within purine metabolism; AMP biosynthesis via salvage pathway; AMP from adenine: step 1/1. Catalyzes a salvage reaction resulting in the formation of AMP, that is energically less costly than de novo synthesis. The chain is Adenine phosphoribosyltransferase from Bacteroides thetaiotaomicron (strain ATCC 29148 / DSM 2079 / JCM 5827 / CCUG 10774 / NCTC 10582 / VPI-5482 / E50).